Reading from the N-terminus, the 880-residue chain is 3-isopropylmalate dehydratase large subunit gloJ (880 aa).

The [4Fe-4S] cluster site is built by Cys-457, Cys-520, and Cys-523.

It belongs to the aconitase/IPM isomerase family. LeuC type 2 subfamily. Requires [4Fe-4S] cluster as cofactor.

The enzyme catalyses (2R,3S)-3-isopropylmalate = (2S)-2-isopropylmalate. It functions in the pathway mycotoxin biosynthesis. Functionally, 3-isopropylmalate dehydratase large subunit; part of the gene cluster that mediates the biosynthesis of pneumocandins, lipohexapeptides of the echinocandin family that prevent fungal cell wall formation by non-competitive inhibition of beta-1,3-glucan synthase. The 10,12-dimethylmyristoyl side chain is synthesized by the reducing polyketide synthase gloL/GLPKS4. The thioesterase gloN/GLHYD exclusively interacts with gloL/GLPKS4 to maintain turnover of the polyketide side chain. The 10R,12S-dimethylmyristic acid is then transferred to the first thiolation domain of the nonribosomal peptide synthetase gloA/GLNRPS4 by the acyl-AMP ligase gloD/GLligase, followed by its acylation to L-ornithine to trigger elongation of the cyclic hexapeptide. L-ornithine, 4R-hydroxyl-L-proline (generated from L-proline by the dioxygenase gloF/GLOXY2), 3S-hydroxyl-L-homotyrosine (generated by gloG/GLHtyB, gloH/GLHtyA, gloI/GLHtyC, gloJ/GLHtyD and hydroxylated at C-3 by the dioxygenase gloM/GLOXY1), 3R-hydroxyl-L-glutamine (generated from L-glutamine probably by the dioxygenase gloE/GLOXY3) and 3S-hydroxyl-L-proline (generated from L-proline by the dioxygenase gloF/GLOXY2 to yield pneumocandin B0), or 3S-hydroxyl-4S-methyl-L-proline (generated from L-leucine by the dioxygenase gloC/GLOXY4 to yield pneumocandin A0) are sequentially added to the growing chain. The last C domain of gloA/GLNRPS4 is proposed to be responsible for cyclization by condensation to form the peptide bond between L-ornithine and 3S-hydroxyl-4S-methyl-L-proline (for pneumocandin A0) or 3S-hydroxyl-L-proline (for pneumocandin B0). Finally, the subsequent C-4 hydroxylation of 3S-hydroxyl-L-homotyrosine and L-ornithine dihydroxylation at C-4 and C-5 are performed by the cytochrome P450 monooxygenases gloP/GLP450-1 and gloO/GLP450-2, respectively. The chain is 3-isopropylmalate dehydratase large subunit gloJ from Glarea lozoyensis (strain ATCC 20868 / MF5171).